The primary structure comprises 247 residues: Fasciclin-like arabinogalactan protein 6 (247 aa).

Positions 1–23 (MSSSLFSYVVLLIFLFTIPYIQS) are cleaved as a signal peptide. Residues 36-182 (PINLTAILEA…LAVYVVDSVL (147 aa)) enclose the FAS1 domain. Asparagine 38, asparagine 57, asparagine 70, asparagine 142, and asparagine 153 each carry an N-linked (GlcNAc...) asparagine glycan. Over residues 192–212 (TTPTGAPAPKSSTSSSDADSP) the composition is skewed to low complexity. Positions 192–221 (TTPTGAPAPKSSTSSSDADSPAADDEHKSA) are disordered. Glycine 222 carries GPI-anchor amidated glycine lipidation. A propeptide spans 223-247 (SSVKRTSLGIVVSFALFCCSVIYIA) (removed in mature form).

Belongs to the fasciclin-like AGP family.

Its subcellular location is the cell membrane. May be a cell surface adhesion protein. The chain is Fasciclin-like arabinogalactan protein 6 (FLA6) from Arabidopsis thaliana (Mouse-ear cress).